A 293-amino-acid polypeptide reads, in one-letter code: Lymphocyte antigen 6 complex locus protein G6f (293 aa).

The N-terminal stretch at 1 to 19 is a signal peptide; sequence MAMVVFLLLYLCGHPQAAA. The region spanning 20-124 is the Ig-like V-type domain; the sequence is DNIQTLYVPS…HKYQNWRVYD (105 aa). Residues 20–237 are Extracellular-facing; that stretch reads DNIQTLYVPS…APLPSWDVSW (218 aa). Cys37 and Cys108 are oxidised to a cystine. Asn90 is a glycosylation site (N-linked (GlcNAc...) asparagine). The helical transmembrane segment at 238–258 threads the bilayer; the sequence is ILMLLFAAGQGVTIIALSIVI. Topologically, residues 259-293 are cytoplasmic; that stretch reads WRHQRAQGTQDREPSIPHFKPEVQVYENIHLARLR. Residue Tyr284 is modified to Phosphotyrosine.

Homodimer; disulfide-linked. Interacts with GRB2 and GRB7 in a phosphorylation-dependent manner. Post-translationally, N-glycosylated.

It is found in the cell membrane. Functionally, may play a role in the downstream signal transduction pathways involving GRB2 and GRB7. This Rattus norvegicus (Rat) protein is Lymphocyte antigen 6 complex locus protein G6f (Ly6g6f).